The chain runs to 210 residues: Protein RFS1 (210 aa).

The Flavodoxin-like domain occupies V4–F203.

The protein belongs to the WrbA family.

Its subcellular location is the cytoplasm. It is found in the membrane raft. The chain is Protein RFS1 (RFS1) from Saccharomyces cerevisiae (strain ATCC 204508 / S288c) (Baker's yeast).